We begin with the raw amino-acid sequence, 93 residues long: UPF0358 protein RBAM_014700 (93 aa).

The protein belongs to the UPF0358 family.

The chain is UPF0358 protein RBAM_014700 from Bacillus velezensis (strain DSM 23117 / BGSC 10A6 / LMG 26770 / FZB42) (Bacillus amyloliquefaciens subsp. plantarum).